Reading from the N-terminus, the 475-residue chain is Ras-GEF domain-containing family member 1A (475 aa).

The region spanning 33 to 164 (QDGSLVSGSL…SISQMTQNVL (132 aa)) is the N-terminal Ras-GEF domain. The region spanning 208–455 (DPLILAQQLT…FLASFENEGP (248 aa)) is the Ras-GEF domain.

Guanine nucleotide exchange factor (GEF) with specificity for rap2a and other Ras family proteins (in vitro). Plays a role in cell migration. The sequence is that of Ras-GEF domain-containing family member 1A (rasgef1a) from Xenopus tropicalis (Western clawed frog).